The sequence spans 216 residues: Acetate CoA-transferase subunit beta (216 aa).

The active site involves E46.

The protein belongs to the 3-oxoacid CoA-transferase subunit B family. Heterotetramer composed of two alpha subunits (AtoD) and two beta subunits (AtoA).

The protein resides in the cytoplasm. It catalyses the reaction an acyl-CoA + acetate = a carboxylate + acetyl-CoA. The catalysed reaction is acetoacetate + acetyl-CoA = acetoacetyl-CoA + acetate. The enzyme catalyses butanoate + acetyl-CoA = butanoyl-CoA + acetate. It carries out the reaction acetoacetate + butanoyl-CoA = acetoacetyl-CoA + butanoate. Its pathway is lipid metabolism; short-chain fatty acid metabolism. Its activity is regulated as follows. Inhibited by p-chloromercuribenzoate. In terms of biological role, coenzyme A transferase which is involved in short-chain fatty acid degradation and catalyzes the activation of short-chain fatty acids to their respective CoA thiolesters. During acetoacetate degradation, catalyzes the transfer of CoA from acetyl-CoA to acetoacetate by a mechanism involving a covalent enzyme-CoA compound as a reaction intermediate. Utilizes a variety of short chain acyl-CoA and carboxylic acid substrates but exhibits maximal activity with normal and 3-keto substrates. The polypeptide is Acetate CoA-transferase subunit beta (Escherichia coli (strain K12)).